A 938-amino-acid chain; its full sequence is Isoleucine--tRNA ligase (938 aa).

Residues 58-68 (PYANGSIHIGH) carry the 'HIGH' region motif. At lysine 183 the chain carries N6-acetyllysine. Glutamate 561 serves as a coordination point for L-isoleucyl-5'-AMP. Residues 602–606 (KMSKS) carry the 'KMSKS' region motif. Residue lysine 605 participates in ATP binding. Cysteine 901, cysteine 904, cysteine 921, and cysteine 924 together coordinate Zn(2+).

It belongs to the class-I aminoacyl-tRNA synthetase family. IleS type 1 subfamily. In terms of assembly, monomer. The cofactor is Zn(2+).

The protein resides in the cytoplasm. It carries out the reaction tRNA(Ile) + L-isoleucine + ATP = L-isoleucyl-tRNA(Ile) + AMP + diphosphate. In terms of biological role, catalyzes the attachment of isoleucine to tRNA(Ile). As IleRS can inadvertently accommodate and process structurally similar amino acids such as valine, to avoid such errors it has two additional distinct tRNA(Ile)-dependent editing activities. One activity is designated as 'pretransfer' editing and involves the hydrolysis of activated Val-AMP. The other activity is designated 'posttransfer' editing and involves deacylation of mischarged Val-tRNA(Ile). The chain is Isoleucine--tRNA ligase from Shigella flexneri.